The primary structure comprises 57 residues: Metallothionein (57 aa).

It belongs to the metallothionein superfamily. Type 14 family.

This protein complexes cadmium, zinc and copper. In Thermostichus vulcanus (Synechococcus vulcanus), this protein is Metallothionein (mtnA).